Here is a 259-residue protein sequence, read N- to C-terminus: Undecaprenyl-diphosphatase 3 (259 aa).

8 helical membrane passes run 1-21 (MNWL…FLPI), 39-59 (AGLF…FIYY), 71-91 (FSKL…IGLL), 99-119 (ISKT…FLYM), 133-153 (ITYK…FPAI), 174-194 (AYFS…LQFV), 208-228 (SLIV…SWMI), and 236-256 (LKVF…LQFT).

This sequence belongs to the UppP family.

The protein localises to the cell membrane. The enzyme catalyses di-trans,octa-cis-undecaprenyl diphosphate + H2O = di-trans,octa-cis-undecaprenyl phosphate + phosphate + H(+). Its function is as follows. Catalyzes the dephosphorylation of undecaprenyl diphosphate (UPP). Confers resistance to bacitracin. In Bacillus cereus (strain ATCC 10987 / NRS 248), this protein is Undecaprenyl-diphosphatase 3.